A 728-amino-acid polypeptide reads, in one-letter code: Propionyl-CoA carboxylase alpha chain, mitochondrial (728 aa).

The N-terminal 52 residues, 1 to 52, are a transit peptide targeting the mitochondrion; sequence MAGFWVGTAPLVAAGRRGRWPPQQLMLSAALRTLKHVLYYSRQCLMVSRNLG. The 448-residue stretch at 62–509 folds into the Biotin carboxylation domain; the sequence is TFDKILVANR…STKFLSDVYP (448 aa). An N6-acetyllysine; alternate modification is found at Lys65. Residue Lys65 is modified to N6-succinyllysine; alternate. Position 119 is an N6-succinyllysine (Lys119). At Lys150 the chain carries N6-acetyllysine; alternate. An N6-succinyllysine; alternate modification is found at Lys150. Residue Lys177 coordinates ATP. The ATP-grasp domain occupies 181 to 378; it reads KLLAKKAEVN…LVQEMIRVAK (198 aa). Lys200 carries the post-translational modification N6-acetyllysine; alternate. The residue at position 200 (Lys200) is an N6-succinyllysine; alternate. Residues 209–270, Glu261, and Asn296 each bind ATP; that span reads AREI…PRHI. The residue at position 252 (Ser252) is a Phosphoserine. Residue Lys262 is modified to N6-succinyllysine. Lys328 bears the N6-acetyllysine; alternate mark. Lys328 carries the post-translational modification N6-succinyllysine; alternate. Residues Glu336, Glu349, and Asn351 each coordinate Mg(2+). Residues Glu336, Glu349, and Asn351 each coordinate Mn(2+). The active site involves Glu349. Residues Lys385 and Lys407 each carry the N6-succinyllysine modification. Position 409 (Phe409) interacts with biotin. Position 496 is an N6-acetyllysine (Lys496). N6-succinyllysine occurs at positions 502, 513, and 648. Residues 653-728 enclose the Biotinyl-binding domain; the sequence is KVTEDTSSVL…GEGDLLVELE (76 aa). At Lys694 the chain carries N6-biotinyllysine; by HLCS.

As to quaternary structure, the holoenzyme is a dodecamer composed of 6 PCCA/alpha subunits and 6 PCCB/beta subunits. Interacts (via the biotin carboxylation domain) with SIRT4. Interacts with SIRT3 and SIRT5. The cofactor is Mg(2+). Requires Mn(2+) as cofactor. Biotin serves as cofactor. In terms of processing, acetylated. Post-translationally, the biotin cofactor is covalently attached to the C-terminal biotinyl-binding domain and is required for the catalytic activity. Biotinylation is catalyzed by HLCS.

It localises to the mitochondrion matrix. The enzyme catalyses propanoyl-CoA + hydrogencarbonate + ATP = (S)-methylmalonyl-CoA + ADP + phosphate + H(+). The catalysed reaction is butanoyl-CoA + hydrogencarbonate + ATP = (2S)-ethylmalonyl-CoA + ADP + phosphate + H(+). The protein operates within metabolic intermediate metabolism; propanoyl-CoA degradation; succinyl-CoA from propanoyl-CoA: step 1/3. In terms of biological role, this is one of the 2 subunits of the biotin-dependent propionyl-CoA carboxylase (PCC), a mitochondrial enzyme involved in the catabolism of odd chain fatty acids, branched-chain amino acids isoleucine, threonine, methionine, and valine and other metabolites. Propionyl-CoA carboxylase catalyzes the carboxylation of propionyl-CoA/propanoyl-CoA to D-methylmalonyl-CoA/(S)-methylmalonyl-CoA. Within the holoenzyme, the alpha subunit catalyzes the ATP-dependent carboxylation of the biotin carried by the biotin carboxyl carrier (BCC) domain, while the beta subunit then transfers the carboxyl group from carboxylated biotin to propionyl-CoA. Propionyl-CoA carboxylase also significantly acts on butyryl-CoA/butanoyl-CoA, which is converted to ethylmalonyl-CoA/(2S)-ethylmalonyl-CoA at a much lower rate. Other alternative minor substrates include (2E)-butenoyl-CoA/crotonoyl-CoA. This chain is Propionyl-CoA carboxylase alpha chain, mitochondrial, found in Homo sapiens (Human).